The primary structure comprises 490 residues: Cheilanthifoline synthase (490 aa).

Residues 2–22 form a helical membrane-spanning segment; the sequence is EESLWVVTATVVVVFAIAKLL. A heme-binding site is contributed by cysteine 432.

It belongs to the cytochrome P450 family. Heme is required as a cofactor. In terms of tissue distribution, expressed in roots. Detected in leaves and stems.

It localises to the endoplasmic reticulum membrane. The catalysed reaction is (S)-scoulerine + reduced [NADPH--hemoprotein reductase] + O2 = (S)-cheilanthifoline + oxidized [NADPH--hemoprotein reductase] + 2 H2O + H(+). The protein operates within alkaloid biosynthesis. Its function is as follows. Methylenedioxy bridge-forming cytochrome P450 involved in the biosynthesis of isoquinoline alkaloids. Converts (S)-scoulerine into (R,S)-cheilanthifoline. Catalyzes an oxidative reaction that does not incorporate oxygen into the product. This Eschscholzia californica (California poppy) protein is Cheilanthifoline synthase (CYP719A5).